A 134-amino-acid chain; its full sequence is B3 domain-containing protein At1g16640 (134 aa).

Residues 7 to 100 (VQFMKPFISE…TFYVIIYGHN (94 aa)) constitute a DNA-binding region (TF-B3).

Its subcellular location is the nucleus. The chain is B3 domain-containing protein At1g16640 from Arabidopsis thaliana (Mouse-ear cress).